A 351-amino-acid polypeptide reads, in one-letter code: Phenylalanine--tRNA ligase alpha subunit (351 aa).

Glutamate 276 is a Mg(2+) binding site.

It belongs to the class-II aminoacyl-tRNA synthetase family. Phe-tRNA synthetase alpha subunit type 1 subfamily. As to quaternary structure, tetramer of two alpha and two beta subunits. It depends on Mg(2+) as a cofactor.

The protein resides in the cytoplasm. The catalysed reaction is tRNA(Phe) + L-phenylalanine + ATP = L-phenylalanyl-tRNA(Phe) + AMP + diphosphate + H(+). This Psychrobacter arcticus (strain DSM 17307 / VKM B-2377 / 273-4) protein is Phenylalanine--tRNA ligase alpha subunit.